The following is a 340-amino-acid chain: MQLKDFDFDLPASLIAQHPIKNRTDSRLLIKRSSIIDIQFNQIGDFFQSGDLLIMNNTKVIPARLFGTKETGGKVEIMIERILDENQVLAMIKASRAPKIGSCIFLENDVNIIVYQKDNGFYTLIFETDSLFDLLNNIGHTPLPPYIKRTNNVQDLSRYQTVYAQKDGAVAAPTAGLHFDDSLLAQLKIQGIDHLFVTLHIGSGTFTPIRTDNIKNHVMHSEIFEISQVTVDRINLTKANGGRIIAVGTTTVRVLESSLKNGKLIAQNGETDIFIYPSYQFRIVDSLITNFHLPKSSLLMLVSAFIGRDKMLELYKHAIEQKYKFLSYGDAMFLEKNNDL.

Belongs to the QueA family. As to quaternary structure, monomer.

Its subcellular location is the cytoplasm. It carries out the reaction 7-aminomethyl-7-carbaguanosine(34) in tRNA + S-adenosyl-L-methionine = epoxyqueuosine(34) in tRNA + adenine + L-methionine + 2 H(+). Its pathway is tRNA modification; tRNA-queuosine biosynthesis. Transfers and isomerizes the ribose moiety from AdoMet to the 7-aminomethyl group of 7-deazaguanine (preQ1-tRNA) to give epoxyqueuosine (oQ-tRNA). The polypeptide is S-adenosylmethionine:tRNA ribosyltransferase-isomerase (Vesicomyosocius okutanii subsp. Calyptogena okutanii (strain HA)).